A 294-amino-acid polypeptide reads, in one-letter code: MLENLSTEHRNEKTMNLDEMNIKEVLQSMNEEDRTVALAVEKEIEHIEKVVRVVIQSFEEEGRLIYIGAGTSGRLGILDAVECPPTFGTDDKMVQGFIAGGLKAFTKAVEGAEDREELAEEDLKSIGLNEKDTVIGIAASGRTPYVIGGLKYANSVGASTASISCNKNAEISKYAKLNVEVETGAEILTGSTRLKAGTAQKLVLNMISTASMIGVGKVYKNLMVDVQSTNEKLVERSKRIIVEATGASYEVAAEYYEKAERNVKAAIVMVLLQCEYGEALEKLKEAKGFVKKAL.

Positions 54–217 (VIQSFEEEGR…STASMIGVGK (164 aa)) constitute an SIS domain. The active-site Proton donor is the Glu82. Residue Glu113 is part of the active site.

This sequence belongs to the GCKR-like family. MurNAc-6-P etherase subfamily. In terms of assembly, homodimer.

It catalyses the reaction N-acetyl-D-muramate 6-phosphate + H2O = N-acetyl-D-glucosamine 6-phosphate + (R)-lactate. It participates in amino-sugar metabolism; N-acetylmuramate degradation. Its function is as follows. Specifically catalyzes the cleavage of the D-lactyl ether substituent of MurNAc 6-phosphate, producing GlcNAc 6-phosphate and D-lactate. This chain is N-acetylmuramic acid 6-phosphate etherase, found in Bacillus cereus (strain 03BB102).